We begin with the raw amino-acid sequence, 383 residues long: Putative glutamate--cysteine ligase 2 (383 aa).

This sequence belongs to the glutamate--cysteine ligase type 2 family. YbdK subfamily.

It catalyses the reaction L-cysteine + L-glutamate + ATP = gamma-L-glutamyl-L-cysteine + ADP + phosphate + H(+). Its function is as follows. ATP-dependent carboxylate-amine ligase which exhibits weak glutamate--cysteine ligase activity. This is Putative glutamate--cysteine ligase 2 from Clavibacter michiganensis subsp. michiganensis (strain NCPPB 382).